The sequence spans 188 residues: Protein SSX5 (188 aa).

Residues lysine 20–aspartate 83 form the KRAB-related domain. Residues aspartate 78–glutamate 188 are disordered. The segment covering threonine 112–aspartate 122 has biased composition (basic and acidic residues). Residues lysine 144–serine 155 show a composition bias toward polar residues. Residues glycine 156 to glutamate 170 are compositionally biased toward basic residues. The span at glutamate 179–glutamate 188 shows a compositional bias: acidic residues.

Belongs to the SSX family.

Its function is as follows. Could act as a modulator of transcription. This Homo sapiens (Human) protein is Protein SSX5 (SSX5).